Reading from the N-terminus, the 42-residue chain is Photosystem I reaction center subunit IX (42 aa).

A helical membrane pass occupies residues 7 to 27 (YLSTAPVLAAIWFAILAGLLI).

This sequence belongs to the PsaJ family.

It is found in the plastid. Its subcellular location is the chloroplast thylakoid membrane. In terms of biological role, may help in the organization of the PsaE and PsaF subunits. The sequence is that of Photosystem I reaction center subunit IX from Zygnema circumcarinatum (Green alga).